Consider the following 312-residue polypeptide: Acyl-CoA C20 Delta5-desaturase (312 aa).

2 consecutive transmembrane segments (helical) span residues 45-65 (VFHI…PSTF) and 69-89 (SFWV…TLSF). Residues His90, His95, His127, His130, and His131 each contribute to the Fe cation site. A Histidine box-1 motif is present at residues 90-95 (HRNLTH). Residues 127-131 (HRYHH) carry the Histidine box-2 motif. Residues 193 to 213 (LQAALLYLFGGFPFIVWGMAV) form a helical membrane-spanning segment. Positions 230, 259, 262, and 263 each coordinate Fe cation. A Histidine box-3 motif is present at residues 259 to 263 (HNNHH).

This sequence belongs to the fatty acid desaturase type 1 family. Requires Fe(2+) as cofactor.

It localises to the membrane. The enzyme catalyses (11Z,14Z)-eicosadienoyl-CoA + AH2 + O2 = (5Z,11Z,14Z)-eicosatrienoyl-CoA + A + 2 H2O. It carries out the reaction (11Z,14Z,17Z)-eicosatrienoyl-CoA + AH2 + O2 = (5Z,11Z,14Z,17Z)-eicosatetraenoyl-CoA + A + 2 H2O. It participates in lipid metabolism; polyunsaturated fatty acid biosynthesis. Catalyzes the desaturation of 20:2Delta(11,14) and 20:3Delta(11,14,17) to generate sciadonic acid (20:3Delta(5,11,14)) and juniperonic acid (20:4Delta(5,11,14,17)). The sequence is that of Acyl-CoA C20 Delta5-desaturase from Anemone leveillei (Windflower).